Consider the following 320-residue polypeptide: Nucleotide-binding protein Acid_7395 (320 aa).

Positions 1–34 (MPLRKKGAATTKAAATRKDSAKAPASSKRKDAPQ) are disordered. 44–51 (GLSGSGKG) is an ATP binding site. 94-97 (DIRE) lines the GTP pocket.

This sequence belongs to the RapZ-like family.

Displays ATPase and GTPase activities. The protein is Nucleotide-binding protein Acid_7395 of Solibacter usitatus (strain Ellin6076).